The primary structure comprises 312 residues: Ribonuclease Z (312 aa).

Residues histidine 62, histidine 64, aspartate 66, histidine 67, histidine 144, aspartate 215, and histidine 273 each contribute to the Zn(2+) site. Aspartate 66 functions as the Proton acceptor in the catalytic mechanism.

It belongs to the RNase Z family. In terms of assembly, homodimer. Zn(2+) serves as cofactor.

It catalyses the reaction Endonucleolytic cleavage of RNA, removing extra 3' nucleotides from tRNA precursor, generating 3' termini of tRNAs. A 3'-hydroxy group is left at the tRNA terminus and a 5'-phosphoryl group is left at the trailer molecule.. Zinc phosphodiesterase, which displays some tRNA 3'-processing endonuclease activity. Probably involved in tRNA maturation, by removing a 3'-trailer from precursor tRNA. This Prochlorococcus marinus (strain AS9601) protein is Ribonuclease Z.